The primary structure comprises 430 residues: S-adenosylmethionine synthase (430 aa).

Histidine 14 serves as a coordination point for ATP. Residue aspartate 16 coordinates Mg(2+). Residue glutamate 42 coordinates K(+). Positions 55 and 98 each coordinate L-methionine. A flexible loop region spans residues 98-108 (QSADINRGVER). ATP contacts are provided by residues 164–166 (DAK), 254–255 (KF), aspartate 263, 269–270 (RK), alanine 286, and lysine 290. Aspartate 263 contributes to the L-methionine binding site. Lysine 294 provides a ligand contact to L-methionine.

The protein belongs to the AdoMet synthase family. In terms of assembly, homotetramer; dimer of dimers. It depends on Mg(2+) as a cofactor. Requires K(+) as cofactor.

The protein resides in the cytoplasm. It carries out the reaction L-methionine + ATP + H2O = S-adenosyl-L-methionine + phosphate + diphosphate. The protein operates within amino-acid biosynthesis; S-adenosyl-L-methionine biosynthesis; S-adenosyl-L-methionine from L-methionine: step 1/1. Catalyzes the formation of S-adenosylmethionine (AdoMet) from methionine and ATP. The overall synthetic reaction is composed of two sequential steps, AdoMet formation and the subsequent tripolyphosphate hydrolysis which occurs prior to release of AdoMet from the enzyme. This Bacteroides fragilis (strain ATCC 25285 / DSM 2151 / CCUG 4856 / JCM 11019 / LMG 10263 / NCTC 9343 / Onslow / VPI 2553 / EN-2) protein is S-adenosylmethionine synthase.